Consider the following 236-residue polypeptide: 2-C-methyl-D-erythritol 4-phosphate cytidylyltransferase (236 aa).

It belongs to the IspD/TarI cytidylyltransferase family. IspD subfamily.

It carries out the reaction 2-C-methyl-D-erythritol 4-phosphate + CTP + H(+) = 4-CDP-2-C-methyl-D-erythritol + diphosphate. Its pathway is isoprenoid biosynthesis; isopentenyl diphosphate biosynthesis via DXP pathway; isopentenyl diphosphate from 1-deoxy-D-xylulose 5-phosphate: step 2/6. Its function is as follows. Catalyzes the formation of 4-diphosphocytidyl-2-C-methyl-D-erythritol from CTP and 2-C-methyl-D-erythritol 4-phosphate (MEP). This chain is 2-C-methyl-D-erythritol 4-phosphate cytidylyltransferase, found in Pseudomonas syringae pv. tomato (strain ATCC BAA-871 / DC3000).